Consider the following 163-residue polypeptide: ATP synthase subunit b 1 (163 aa).

Residues alanine 7–valine 27 traverse the membrane as a helical segment.

It belongs to the ATPase B chain family. F-type ATPases have 2 components, F(1) - the catalytic core - and F(0) - the membrane proton channel. F(1) has five subunits: alpha(3), beta(3), gamma(1), delta(1), epsilon(1). F(0) has three main subunits: a(1), b(2) and c(10-14). The alpha and beta chains form an alternating ring which encloses part of the gamma chain. F(1) is attached to F(0) by a central stalk formed by the gamma and epsilon chains, while a peripheral stalk is formed by the delta and b chains.

Its subcellular location is the cell inner membrane. Functionally, f(1)F(0) ATP synthase produces ATP from ADP in the presence of a proton or sodium gradient. F-type ATPases consist of two structural domains, F(1) containing the extramembraneous catalytic core and F(0) containing the membrane proton channel, linked together by a central stalk and a peripheral stalk. During catalysis, ATP synthesis in the catalytic domain of F(1) is coupled via a rotary mechanism of the central stalk subunits to proton translocation. In terms of biological role, component of the F(0) channel, it forms part of the peripheral stalk, linking F(1) to F(0). This is ATP synthase subunit b 1 from Rhodopseudomonas palustris (strain ATCC BAA-98 / CGA009).